The following is a 651-amino-acid chain: Acetyl-coenzyme A synthetase (651 aa).

Residues 193–196 (RAGR), Thr313, and Asn337 each bind CoA. Residues 389-391 (GEP), 413-418 (DTWWQT), Asp502, and Arg517 each bind ATP. Ser525 provides a ligand contact to CoA. Residue Arg528 coordinates ATP. Residues Val539, His541, and Val544 each contribute to the Mg(2+) site. Residue Arg586 coordinates CoA. Lys611 is subject to N6-acetyllysine.

It belongs to the ATP-dependent AMP-binding enzyme family. It depends on Mg(2+) as a cofactor. In terms of processing, acetylated. Deacetylation by the SIR2-homolog deacetylase activates the enzyme.

It carries out the reaction acetate + ATP + CoA = acetyl-CoA + AMP + diphosphate. Functionally, catalyzes the conversion of acetate into acetyl-CoA (AcCoA), an essential intermediate at the junction of anabolic and catabolic pathways. AcsA undergoes a two-step reaction. In the first half reaction, AcsA combines acetate with ATP to form acetyl-adenylate (AcAMP) intermediate. In the second half reaction, it can then transfer the acetyl group from AcAMP to the sulfhydryl group of CoA, forming the product AcCoA. The protein is Acetyl-coenzyme A synthetase of Shewanella denitrificans (strain OS217 / ATCC BAA-1090 / DSM 15013).